The sequence spans 467 residues: Metal transporter cnnm-4 (467 aa).

Over methionine 1–arginine 110 the chain is Extracellular. Asparagine 61 is a glycosylation site (N-linked (GlcNAc...) asparagine). The CNNM transmembrane domain maps to aspartate 107–asparagine 293. Residues valine 111 to leucine 131 form a helical membrane-spanning segment. Topologically, residues asparagine 132–asparagine 170 are cytoplasmic. Residues phenylalanine 171–methionine 191 traverse the membrane as a helical segment. Residues asparagine 192 to glutamate 196 lie on the Extracellular side of the membrane. A helical transmembrane segment spans residues phenylalanine 197–phenylalanine 217. The Cytoplasmic portion of the chain corresponds to threonine 218–glutamine 238. A helical membrane pass occupies residues tyrosine 239–leucine 259. Residues asparagine 260–glutamate 467 lie on the Extracellular side of the membrane. 2 CBS domains span residues methionine 317–threonine 381 and lysine 394–glutamate 461. Residue asparagine 364 is glycosylated (N-linked (GlcNAc...) asparagine).

Belongs to the ACDP family.

It localises to the cell membrane. Probable metal transporter. Probably acts redundantly with the other metal transport proteins cnnm-1, cnnm-2, cnnm-3 and cnnm-5 to regulate Mg(2+) homeostasis. The chain is Metal transporter cnnm-4 from Caenorhabditis elegans.